The sequence spans 406 residues: Cysteine desulfurase (406 aa).

Lys-226 is subject to N6-(pyridoxal phosphate)lysine. The active-site Cysteine persulfide intermediate is the Cys-364.

It belongs to the class-V pyridoxal-phosphate-dependent aminotransferase family. Csd subfamily. In terms of assembly, homodimer. Interacts with SufE and the SufBCD complex composed of SufB, SufC and SufD. The interaction with SufE is required to mediate the direct transfer of the sulfur atom from the S-sulfanylcysteine. Requires pyridoxal 5'-phosphate as cofactor.

Its subcellular location is the cytoplasm. It carries out the reaction (sulfur carrier)-H + L-cysteine = (sulfur carrier)-SH + L-alanine. The catalysed reaction is L-selenocysteine + AH2 = hydrogenselenide + L-alanine + A + H(+). It participates in cofactor biosynthesis; iron-sulfur cluster biosynthesis. In terms of biological role, cysteine desulfurases mobilize the sulfur from L-cysteine to yield L-alanine, an essential step in sulfur metabolism for biosynthesis of a variety of sulfur-containing biomolecules. Component of the suf operon, which is activated and required under specific conditions such as oxidative stress and iron limitation. Acts as a potent selenocysteine lyase in vitro, that mobilizes selenium from L-selenocysteine. Selenocysteine lyase activity is however unsure in vivo. This is Cysteine desulfurase from Salmonella choleraesuis (strain SC-B67).